Reading from the N-terminus, the 176-residue chain is Ribosome maturation factor RimP (176 aa).

It belongs to the RimP family.

It is found in the cytoplasm. In terms of biological role, required for maturation of 30S ribosomal subunits. In Chlorobium limicola (strain DSM 245 / NBRC 103803 / 6330), this protein is Ribosome maturation factor RimP.